Reading from the N-terminus, the 355-residue chain is Neutral protease 2 homolog MEP6 (355 aa).

Residues 1–19 (MRLSSSLIALVALAGQALA) form the signal peptide. A propeptide spanning residues 20 to 179 (LPFNELAERD…ASAIPELNKR (160 aa)) is cleaved from the precursor. Intrachain disulfides connect C187–C259 and C266–C283. Zn(2+) is bound at residue H307. Residue E308 is part of the active site. Residues H311 and D322 each contribute to the Zn(2+) site.

The protein belongs to the peptidase M35 family. The cofactor is Zn(2+).

Its subcellular location is the secreted. It carries out the reaction Preferential cleavage of bonds with hydrophobic residues in P1'. Also 3-Asn-|-Gln-4 and 8-Gly-|-Ser-9 bonds in insulin B chain.. Its function is as follows. Secreted metalloproteinase that allows assimilation of proteinaceous substrates. Shows high activities on basic nuclear substrates such as histone and protamine. May be involved in virulence. This Coccidioides posadasii (strain C735) (Valley fever fungus) protein is Neutral protease 2 homolog MEP6 (MEP6).